The sequence spans 254 residues: MQLPRNPFKAALDGDTRYGCWAGFATGYAAEILATTGFDWLLIDGEHAPNIVPTTLAQLQALAAYPCAPVVRTVNHDPALIKQLLDIGTQTLMIPMVDTAEQAAQLVAATRYPPHGFRGVGGGLTRATRWGAVEDYMAQAHEELCLIVQVESRSGVDNAEAIAATPGVDAIFVGPFDLSTETGHIGDPTHPEVQAMIRHTLDATHAAGKAAGILAPAEADARRYAQWGFDFIAVGIDISLLRQAAMETVSRYKG.

Residue His47 is the Proton acceptor of the active site. Positions 151 and 177 each coordinate a divalent metal cation.

Belongs to the HpcH/HpaI aldolase family. A divalent metal cation is required as a cofactor.

The enzyme catalyses D-glyceraldehyde + pyruvate = 2-dehydro-3-deoxy-L-galactonate. Its function is as follows. Aldolase which can catalyze in vitro the aldolisation reaction between hydroxypyruvate (HPA) or pyruvate (PA) and D-glyceraldehyde (D-GA). The condensation of pyruvate and D-glyceraldehyde produces 2-dehydro-3-deoxy-L-galactonate as the major product. Has weak activity with hydroxypyruvate and D-glyceraldehyde. The sequence is that of Hydroxypyruvate/pyruvate aldolase from Chromohalobacter salexigens (strain ATCC BAA-138 / DSM 3043 / CIP 106854 / NCIMB 13768 / 1H11).